We begin with the raw amino-acid sequence, 209 residues long: Thiamine-phosphate synthase (209 aa).

4-amino-2-methyl-5-(diphosphooxymethyl)pyrimidine-binding positions include 35-39 (QYRDK) and N67. Mg(2+) contacts are provided by D68 and D86. T105 contacts 4-amino-2-methyl-5-(diphosphooxymethyl)pyrimidine. 132 to 134 (SNT) is a 2-[(2R,5Z)-2-carboxy-4-methylthiazol-5(2H)-ylidene]ethyl phosphate binding site. Residue K135 coordinates 4-amino-2-methyl-5-(diphosphooxymethyl)pyrimidine. Residue G162 participates in 2-[(2R,5Z)-2-carboxy-4-methylthiazol-5(2H)-ylidene]ethyl phosphate binding.

Belongs to the thiamine-phosphate synthase family. Mg(2+) serves as cofactor.

It catalyses the reaction 2-[(2R,5Z)-2-carboxy-4-methylthiazol-5(2H)-ylidene]ethyl phosphate + 4-amino-2-methyl-5-(diphosphooxymethyl)pyrimidine + 2 H(+) = thiamine phosphate + CO2 + diphosphate. The catalysed reaction is 2-(2-carboxy-4-methylthiazol-5-yl)ethyl phosphate + 4-amino-2-methyl-5-(diphosphooxymethyl)pyrimidine + 2 H(+) = thiamine phosphate + CO2 + diphosphate. The enzyme catalyses 4-methyl-5-(2-phosphooxyethyl)-thiazole + 4-amino-2-methyl-5-(diphosphooxymethyl)pyrimidine + H(+) = thiamine phosphate + diphosphate. Its pathway is cofactor biosynthesis; thiamine diphosphate biosynthesis; thiamine phosphate from 4-amino-2-methyl-5-diphosphomethylpyrimidine and 4-methyl-5-(2-phosphoethyl)-thiazole: step 1/1. Condenses 4-methyl-5-(beta-hydroxyethyl)thiazole monophosphate (THZ-P) and 2-methyl-4-amino-5-hydroxymethyl pyrimidine pyrophosphate (HMP-PP) to form thiamine monophosphate (TMP). The chain is Thiamine-phosphate synthase from Pseudomonas fluorescens (strain SBW25).